Reading from the N-terminus, the 440-residue chain is Ferreportin (440 aa).

Residues 1–8 lie on the Cytoplasmic side of the membrane; that stretch reads MKVQSLLR. The helical transmembrane segment at 9 to 38 threads the bilayer; sequence IETQLLLGRLLTRSGDQAWDFVVPFALLVI. Ca(2+) is bound at residue aspartate 24. The Extracellular segment spans residues 39–42; sequence FPGK. Residues 43-69 form a helical membrane-spanning segment; that stretch reads LQVAAFYYLIVKIGTFLLTPSSGKWID. Residues 70-72 lie on the Cytoplasmic side of the membrane; sequence THP. Residues 73-103 traverse the membrane as a helical segment; it reads RIQVVKWGVWLQFFAILAGMVFFGMLDGLVR. Ca(2+) is bound at residue glutamine 84. Residues 104 to 109 are Extracellular-facing; the sequence is AGGRES. A helical transmembrane segment spans residues 110 to 145; that stretch reads WLLSVLFIALALSGVMASLGSQITDISVGNDLAPSL. Residues 146–147 lie on the Cytoplasmic side of the membrane; sequence VA. Residues 148–176 form a helical membrane-spanning segment; sequence PEKLTHFNSWLRRIDLATEVGAPILAGAL. Over 177–186 the chain is Extracellular; the sequence is FAFHPEQLPL. The helical transmembrane segment at 187 to 213 threads the bilayer; sequence AGLFLIGLWNLVSFVPEYFLLRNVIQR. Asparagine 196 and glutamate 203 together coordinate Ca(2+). At 214-242 the chain is on the cytoplasmic side; sequence SGLKIKVLTEAQSWKDTFHINLRGSFSDP. The helical transmembrane segment at 243–271 threads the bilayer; that stretch reads IFWLILSYALLWLSVLSPHGVLLAAYLKD. At 272 to 276 the chain is on the extracellular side; the sequence is EMRLP. A helical membrane pass occupies residues 277–304; the sequence is ETEIGLFRGLGAVFGLISTVSFPYLVRR. Residues 305–306 lie on the Cytoplasmic side of the membrane; that stretch reads LG. Residues 307–329 traverse the membrane as a helical segment; sequence LISSSRWHLGFQGVTLGIAVTAF. Over 330–335 the chain is Extracellular; the sequence is AMGSTA. Residues 336–365 form a helical membrane-spanning segment; that stretch reads SVYVFLGCILLSRVGLYGFSNGEFELRQRL. At 366–370 the chain is on the cytoplasmic side; that stretch reads IPEGR. Residues 371-395 form a helical membrane-spanning segment; that stretch reads RGELNSLSSLTTTSATLILFSAGSL. The Extracellular segment spans residues 396–398; it reads LPQ. Residues 399–424 traverse the membrane as a helical segment; it reads TEDFKYLVYVSLAAVLLANVVFIKWS. Residues 425-440 lie on the Cytoplasmic side of the membrane; sequence SRQGVVTSGAAEPVES.

The protein belongs to the ferroportin (FP) (TC 2.A.100) family. Ca(2+) serves as cofactor.

The protein resides in the cell membrane. In terms of biological role, iron transpoter that exports Fe(2+) from the cell. Also binds to Co(2+) and Ni(2+). May act as a multivalent divalent metal transporter. The transporter is composed of 12 transmembrane (TM) helices organized into N-terminal (TM1-6) and C-terminal (TM7-12) domains. The substrate-binding site is formed at the interface of the two domains and is alternately accessible from either side of the membrane. The transport cycle is viewed as a series of ligand-induced conformational changes that include open outward and open inward states. This is Ferreportin (slc39) from Bdellovibrio bacteriovorus (strain ATCC 15356 / DSM 50701 / NCIMB 9529 / HD100).